A 217-amino-acid chain; its full sequence is Peroxiredoxin (217 aa).

Positions 2-159 (VVIGEKFPEV…VVRLVKALQT (158 aa)) constitute a Thioredoxin domain. Cys-46 serves as the catalytic Cysteine sulfenic acid (-SOH) intermediate. Arg-122 lines the substrate pocket.

The protein belongs to the peroxiredoxin family. Prx6 subfamily. As to quaternary structure, homodecamer. Pentamer of dimers that assemble into a ring structure.

It is found in the cytoplasm. The catalysed reaction is a hydroperoxide + [thioredoxin]-dithiol = an alcohol + [thioredoxin]-disulfide + H2O. Thiol-specific peroxidase that catalyzes the reduction of hydrogen peroxide and organic hydroperoxides to water and alcohols, respectively. Plays a role in cell protection against oxidative stress by detoxifying peroxides. The polypeptide is Peroxiredoxin (Methanococcus maripaludis (strain C5 / ATCC BAA-1333)).